The primary structure comprises 439 residues: Gnt-II system L-idonate transporter (439 aa).

The Periplasmic segment spans residues 1-11; the sequence is MPLIIIAAGVA. A helical transmembrane segment spans residues 12–34; it reads LLLILMIGFKVNGFIALVLVAAV. Residues 35–53 lie on the Cytoplasmic side of the membrane; that stretch reads VGFAEGMDAQAVLHSIQNG. A helical transmembrane segment spans residues 54-76; sequence IGSTLGGLAMILGFGAMLGKLIS. The Periplasmic segment spans residues 77 to 96; it reads DTGAAQRIATTLIATFGKKR. Residues 97–114 form a helical membrane-spanning segment; sequence VQWALVITGLVVGLAMFF. The Cytoplasmic segment spans residues 115 to 118; the sequence is EVGF. The helical transmembrane segment at 119 to 141 threads the bilayer; that stretch reads VLLLPLVFTIVASSGLPLLYVGV. Over 142–170 the chain is Periplasmic; sequence PMVAALSVTHCFLPPHPGPTAIATIFEAN. The helical transmembrane segment at 171 to 193 threads the bilayer; that stretch reads LGTTLLYGFIITIPTVIVAGPLF. Over 194–218 the chain is Cytoplasmic; that stretch reads SKLLTRFEKAPPEGLFNPHLFSEEE. A helical membrane pass occupies residues 219-241; the sequence is MPSFWNSIFAAVIPVILMAIAAV. Topologically, residues 242–253 are periplasmic; it reads CEITLPKTNTVR. A helical transmembrane segment spans residues 254-276; that stretch reads LFFEFVGNPAVALFIAIVIAIFT. The Cytoplasmic portion of the chain corresponds to 277-290; sequence LGRRNGRTIEQIMD. A helical transmembrane segment spans residues 291 to 310; that stretch reads IIGDSIGAIAMIVFIIAGGG. The Periplasmic portion of the chain corresponds to 311-322; it reads AFKQVLVDSGVG. Residues 323-345 form a helical membrane-spanning segment; it reads HYISHLMTGTTLSPLLMCWTVAA. At 346 to 348 the chain is on the cytoplasmic side; the sequence is LLR. A helical transmembrane segment spans residues 349–371; sequence IALGSATVAAITTAGVVLPIINV. Over 372 to 377 the chain is Periplasmic; sequence THADPA. A helical transmembrane segment spans residues 378–400; it reads LMVLATGAGSVIASHVNDPGFWL. Residues 401–414 are Cytoplasmic-facing; sequence FKGYFNLTVGETLR. The chain crosses the membrane as a helical span at residues 415–437; it reads TWTVMETLISIMGLLGVLAINAV. The Periplasmic segment spans residues 438–439; it reads LH.

It belongs to the GntP permease family.

It localises to the cell inner membrane. It carries out the reaction L-idonate(in) + H(+)(in) = L-idonate(out) + H(+)(out). The enzyme catalyses D-gluconate(in) + H(+)(in) = D-gluconate(out) + H(+)(out). It catalyses the reaction 5-dehydro-D-gluconate(in) + H(+)(in) = 5-dehydro-D-gluconate(out) + H(+)(out). It functions in the pathway carbohydrate acid metabolism; L-idonate degradation. Transporter which is probably involved in L-idonate metabolism. Transports L-idonate from the periplasm across the inner membrane. Can also transport D-gluconate and 5-keto-D-gluconate. It has been reported that gluconate uptake probably occurs via a proton-symport mechanism in E.coli. The sequence is that of Gnt-II system L-idonate transporter from Escherichia coli (strain K12).